The following is a 127-amino-acid chain: Modulator protein MzrA (127 aa).

Residues methionine 1–arginine 9 are Cytoplasmic-facing. Residues glutamine 10–arginine 32 form a helical membrane-spanning segment. Residues histidine 33–glycine 127 lie on the Periplasmic side of the membrane.

Belongs to the MzrA family. In terms of assembly, interacts with EnvZ.

It localises to the cell inner membrane. Functionally, modulates the activity of the EnvZ/OmpR two-component regulatory system, probably by directly modulating EnvZ enzymatic activity and increasing stability of phosphorylated OmpR. The polypeptide is Modulator protein MzrA (Escherichia fergusonii (strain ATCC 35469 / DSM 13698 / CCUG 18766 / IAM 14443 / JCM 21226 / LMG 7866 / NBRC 102419 / NCTC 12128 / CDC 0568-73)).